Here is a 524-residue protein sequence, read N- to C-terminus: Keratin, type II cytoskeletal 72 (524 aa).

The tract at residues 1–136 (MSRQLNLYPG…DPEIQKVRAQ (136 aa)) is head. The segment at 137–172 (EREQIKALNNKFASFIDKVRFLEQQNQVLGTKWELL) is coil 1A. Residues 137–450 (EREQIKALNN…KLLEGEECRM (314 aa)) enclose the IF rod domain. A linker 1 region spans residues 173 to 191 (QQLDLNNCKNNLEPILEGY). The tract at residues 192–283 (TSNLRKQLEM…CLYEGEIAQL (92 aa)) is coil 1B. A linker 12 region spans residues 284 to 307 (QSHISDTSVILSMDNNRDLDLDSI). The tract at residues 308–446 (IAQVRAQYEE…ATYRKLLEGE (139 aa)) is coil 2. Residues 447–524 (ECRMSGEYPN…SSCATKKASR (78 aa)) form a tail region. Residues 495–524 (KTKGSCGGSELKDAPAKTSGSSCATKKASR) are disordered.

Belongs to the intermediate filament family. In terms of assembly, heterotetramer of two type I and two type II keratins.

Functionally, has a role in hair formation. Specific component of keratin intermediate filaments in the inner root sheath (IRS) of the hair follicle. This is Keratin, type II cytoskeletal 72 (KRT72) from Bos taurus (Bovine).